The sequence spans 1040 residues: Multidrug resistance protein MdtB (1040 aa).

12 helical membrane-spanning segments follow: residues leucine 25–alanine 45, leucine 347–alanine 367, isoleucine 369–leucine 389, leucine 396–isoleucine 416, isoleucine 440–phenylalanine 460, phenylalanine 472–proline 492, tryptophan 537–isoleucine 557, leucine 863–valine 883, phenylalanine 888–alanine 908, isoleucine 910–isoleucine 930, isoleucine 968–valine 988, and isoleucine 998–isoleucine 1018.

It belongs to the resistance-nodulation-cell division (RND) (TC 2.A.6) family. MdtB subfamily. As to quaternary structure, part of a tripartite efflux system composed of MdtA, MdtB and MdtC. MdtB forms a heteromultimer with MdtC.

It localises to the cell inner membrane. This Salmonella agona (strain SL483) protein is Multidrug resistance protein MdtB.